A 349-amino-acid polypeptide reads, in one-letter code: MSQHATKKRKLDRSTEDYMYFDSYSDVTIHEEMIADTVRTNTYRMGIFKNSKSIEGKVVLDVGAGTGVLSLFCAQAGARKVYAVEASSIADQAVKIVKLNQMEDRIEVIKSTLETIELAEKVDVIVSEWMGYALLHESMLNSVIFARDKWLKPGGLILPSRADLYIAPINDVVVEGRLDFWSTVKGQYGVDMSCMTDFARKCIMNKDITVNPVTVEDVLSHPCKFAELDLNTVTLEQLRDVNGSFSCVCFGSSSIHAFCVWFTVTFPAEEKALVLSTSPFKAETHWKQAVLYLDDAVDVMQDTKVEGEISLYPSEENSRHICIRVDYVIGEQKKHSKSFSIPDQYLEVK.

One can recognise an SAM-dependent MTase PRMT-type domain in the interval 17–324; it reads DYMYFDSYSD…EENSRHICIR (308 aa). Residues H30, R39, G63, E85, and E114 each coordinate S-adenosyl-L-methionine. Residues E128 and E137 contribute to the active site.

Belongs to the class I-like SAM-binding methyltransferase superfamily. Protein arginine N-methyltransferase family. PRMT6 subfamily.

The protein localises to the nucleus. The catalysed reaction is L-arginyl-[protein] + 2 S-adenosyl-L-methionine = N(omega),N(omega)-dimethyl-L-arginyl-[protein] + 2 S-adenosyl-L-homocysteine + 2 H(+). Arginine methyltransferase that can catalyze the formation of both omega-N monomethylarginine (MMA) and asymmetrical dimethylarginine (aDMA), with a strong preference for the formation of aDMA. Preferentially methylates arginyl residues present in a glycine and arginine-rich domain and displays preference for monomethylated substrates. Specifically mediates the asymmetric dimethylation of histone H3 'Arg-2' to form H3R2me2a. H3R2me2a represents a specific tag for epigenetic transcriptional repression and is mutually exclusive with methylation on histone H3 'Lys-4' (H3K4me2 and H3K4me3). Acts as a transcriptional repressor of various genes such as HOXA2, THBS1 and TP53. Repression of TP53 blocks cellular senescence. Also methylates histone H2A and H4 'Arg-3' (H2AR3me and H4R3me, respectively). Acts as a regulator of DNA base excision during DNA repair by mediating the methylation of DNA polymerase beta (POLB), leading to the stimulation of its polymerase activity by enhancing DNA binding and processivity. Methylates HMGA1. Regulates alternative splicing events. Acts as a transcriptional coactivator of a number of steroid hormone receptors including ESR1, ESR2, PGR and NR3C1. This Danio rerio (Zebrafish) protein is Protein arginine N-methyltransferase 6 (prmt6).